The following is a 78-amino-acid chain: Delta-conotoxin-like Ai6.1 (78 aa).

An N-terminal signal peptide occupies residues 1–22 (MKLTCVMIVAVLFLTAWTFATA). Positions 23–49 (DDPRNGLGNLFSNAHHEMKNPEASKLN) are excised as a propeptide. 3 disulfide bridges follow: Cys53–Cys68, Cys60–Cys72, and Cys67–Cys77.

It belongs to the conotoxin O1 superfamily. Expressed by the venom duct.

Its subcellular location is the secreted. Functionally, delta-conotoxins bind to site 6 of voltage-gated sodium channels (Nav) and inhibit the inactivation process. This Conus ammiralis (Admiral cone) protein is Delta-conotoxin-like Ai6.1.